Consider the following 151-residue polypeptide: Ribosomal RNA large subunit methyltransferase H (151 aa).

S-adenosyl-L-methionine contacts are provided by residues Gly100 and 119 to 124 (LSKMTF).

The protein belongs to the RNA methyltransferase RlmH family. In terms of assembly, homodimer.

Its subcellular location is the cytoplasm. It carries out the reaction pseudouridine(1915) in 23S rRNA + S-adenosyl-L-methionine = N(3)-methylpseudouridine(1915) in 23S rRNA + S-adenosyl-L-homocysteine + H(+). In terms of biological role, specifically methylates the pseudouridine at position 1915 (m3Psi1915) in 23S rRNA. The polypeptide is Ribosomal RNA large subunit methyltransferase H (Thermotoga maritima (strain ATCC 43589 / DSM 3109 / JCM 10099 / NBRC 100826 / MSB8)).